A 550-amino-acid polypeptide reads, in one-letter code: MDRGAVVGFLLGVCVVSCLAGTPKTSWRRVSVGEDVSLLPAPGPTGRGPTQKLLWAVEPLDGCGPLHPSWVSLMPPKQVPETVVDAACMRAPVPLAMAYAPPAPSATGGLRTDFVWQERAAVVNRSLVIHGVRETDSGLYTLSVGDIKDPARQVASVVLVVQPAPVPTPPPTPADYDEDDNDEGEDESLAGTPASGTPRLPPPPAPPRSWPSAPEVSHVRGVTVRMETPEAILFSPGETFSTNVSIHAIAHDDQTYSMDVVWLRFDVPTSCAEMRIYESCLYHPQLPECLSPADAPCAASTWTSRLAVRSYAGCSRTNPPPRCSAEAHMEPVPGLAWQAASVNLEFRDASPQHSGLYLCVVYVNDHIHAWGHITISTAAQYRNAVVEQPLPQRGADLAEPTHPHVGAPPHAPPTHGALRLGAVMGAALLLSALGLSVWACMTCWRRRAWRAVKSRASGKGPTYIRVADSELYADWSSDSEGERDQVPWLAPPERPDSPSTNGSGFEILSPTAPSVYPRSDGHQSRRQLTTFGSGRPDRRYSQASDSSVFW.

The N-terminal stretch at 1–20 (MDRGAVVGFLLGVCVVSCLA) is a signal peptide. Residues 21–419 (GTPKTSWRRV…HAPPTHGALR (399 aa)) lie on the Virion surface side of the membrane. Residues 63–88 (CGPLHPSWVSLMPPKQVPETVVDAAC) form an interaction with gI region. A glycan (N-linked (GlcNAc...) asparagine; by host) is linked at asparagine 124. The disordered stretch occupies residues 162–214 (QPAPVPTPPPTPADYDEDDNDEGEDESLAGTPASGTPRLPPPPAPPRSWPSAP). Positions 164–173 (APVPTPPPTP) are enriched in pro residues. Residues 175-188 (DYDEDDNDEGEDES) show a composition bias toward acidic residues. Tyrosine 176 bears the Sulfotyrosine; by host mark. The span at 199–209 (RLPPPPAPPRS) shows a compositional bias: pro residues. Residues 235 to 380 (SPGETFSTNV…GHITISTAAQ (146 aa)) are fc-binding. Residue asparagine 243 is glycosylated (N-linked (GlcNAc...) asparagine; by host). Disulfide bonds link cysteine 271–cysteine 297, cysteine 280–cysteine 289, and cysteine 314–cysteine 323. A disordered region spans residues 394-413 (GADLAEPTHPHVGAPPHAPP). Residues 403–413 (PHVGAPPHAPP) are compositionally biased toward low complexity. The chain crosses the membrane as a helical span at residues 420–440 (LGAVMGAALLLSALGLSVWAC). Residues 441–550 (MTCWRRRAWR…SQASDSSVFW (110 aa)) are Intravirion-facing. 2 consecutive short sequence motifs (internalization motif) follow at residues 463-466 (YIRV) and 472-475 (YADW). The interval 470–495 (ELYADWSSDSEGERDQVPWLAPPERP) is interaction with VP22 and UL11. A phosphoserine; by host CK2 mark is found at serine 476 and serine 477. An acidic region spans residues 476 to 484 (SSDSEGERD). The disordered stretch occupies residues 476 to 550 (SSDSEGERDQ…SQASDSSVFW (75 aa)). Serine 503 carries the phosphoserine modification. Polar residues predominate over residues 541-550 (SQASDSSVFW).

It belongs to the alphaherpesvirinae glycoprotein E family. Interacts with gI; this interaction enhances the Fc receptor function of gE. The heterodimer gE/gI interacts with the Fc part of host IgG. Interacts (via C-terminus) with VP22 tegument protein; this interaction is necessary for the recruitment of VP22 to the Golgi and its packaging into virions. Interacts (via C-terminus) with UL11 tegument protein. In terms of processing, phosphorylated on serines within the acidic cluster. Phosphorylation determines whether endocytosed viral gE traffics to the trans-Golgi network or recycles to the cell membrane. N-glycosylated, and sulfated.

It localises to the virion membrane. The protein resides in the host cell membrane. Its subcellular location is the host cell junction. It is found in the host Golgi apparatus membrane. The protein localises to the host endosome membrane. Its function is as follows. In epithelial cells, the heterodimer gE/gI is required for the cell-to-cell spread of the virus, by sorting nascent virions to cell junctions. Once the virus reaches the cell junctions, virus particles can spread to adjacent cells extremely rapidly through interactions with cellular receptors that accumulate at these junctions. Implicated in basolateral spread in polarized cells. In neuronal cells, gE/gI is essential for the anterograde spread of the infection throughout the host nervous system. Together with US9, the heterodimer gE/gI is involved in the sorting and transport of viral structural components toward axon tips. In terms of biological role, the heterodimer gE/gI serves as a receptor for the Fc part of host IgG. Dissociation of gE/gI from IgG occurs at acidic pH. May thus be involved in anti-HSV antibodies bipolar bridging, followed by intracellular endocytosis and degradation, thereby interfering with host IgG-mediated immune responses. The chain is Envelope glycoprotein E (gE) from Human herpesvirus 1 (strain 17) (HHV-1).